Here is a 209-residue protein sequence, read N- to C-terminus: Peptide deformylase 2 (209 aa).

Cysteine 101 and histidine 149 together coordinate Fe cation. The active site involves glutamate 150. Position 153 (histidine 153) interacts with Fe cation.

It belongs to the polypeptide deformylase family. Fe(2+) serves as cofactor.

The enzyme catalyses N-terminal N-formyl-L-methionyl-[peptide] + H2O = N-terminal L-methionyl-[peptide] + formate. In terms of biological role, removes the formyl group from the N-terminal Met of newly synthesized proteins. Requires at least a dipeptide for an efficient rate of reaction. N-terminal L-methionine is a prerequisite for activity but the enzyme has broad specificity at other positions. The chain is Peptide deformylase 2 from Coxiella burnetii (strain RSA 493 / Nine Mile phase I).